The sequence spans 396 residues: DNA polymerase IV (396 aa).

One can recognise a UmuC domain in the interval 6–186; that stretch reads IIHVDMDAFY…LPISRLWGVG (181 aa). Mg(2+) is bound by residues D10 and D104. E105 is a catalytic residue.

The protein belongs to the DNA polymerase type-Y family. As to quaternary structure, monomer. It depends on Mg(2+) as a cofactor.

The protein localises to the cytoplasm. The catalysed reaction is DNA(n) + a 2'-deoxyribonucleoside 5'-triphosphate = DNA(n+1) + diphosphate. Functionally, poorly processive, error-prone DNA polymerase involved in untargeted mutagenesis. Copies undamaged DNA at stalled replication forks, which arise in vivo from mismatched or misaligned primer ends. These misaligned primers can be extended by PolIV. Exhibits no 3'-5' exonuclease (proofreading) activity. May be involved in translesional synthesis, in conjunction with the beta clamp from PolIII. The polypeptide is DNA polymerase IV (Desulfatibacillum aliphaticivorans).